A 132-amino-acid chain; its full sequence is Transmembrane protein 170B (132 aa).

The Extracellular segment spans residues 1 to 37 (MRAEGADHSMINLSVQQVLSLWAHGTVLRNLTEMWYW). An N-linked (GlcNAc...) asparagine glycan is attached at Asn12. Residues 38–58 (IFLWALFSSLFVHGAAGVLMF) form a helical membrane-spanning segment. Over 59 to 68 (VMLQRHRQGR) the chain is Cytoplasmic. The chain crosses the membrane as a helical span at residues 69-89 (VISIIAVSIGFLASVTGAMIT). Topologically, residues 90-104 (SAAVAGIYRVAGKNM) are extracellular. Residues 105–125 (APLEALVWGVGQTVLTLIISF) form a helical membrane-spanning segment. The Cytoplasmic segment spans residues 126-132 (SRILATL).

Belongs to the TMEM170 family. Interacts with CTNNB1.

It is found in the cell membrane. This is Transmembrane protein 170B from Mus musculus (Mouse).